The primary structure comprises 418 residues: UDP-N-acetylglucosamine 1-carboxyvinyltransferase (418 aa).

22–23 (KN) is a binding site for phosphoenolpyruvate. Residue arginine 92 participates in UDP-N-acetyl-alpha-D-glucosamine binding. The active-site Proton donor is cysteine 116. A 2-(S-cysteinyl)pyruvic acid O-phosphothioketal modification is found at cysteine 116. UDP-N-acetyl-alpha-D-glucosamine contacts are provided by residues 121–125 (RPIDL), aspartate 305, and leucine 327.

Belongs to the EPSP synthase family. MurA subfamily.

Its subcellular location is the cytoplasm. The enzyme catalyses phosphoenolpyruvate + UDP-N-acetyl-alpha-D-glucosamine = UDP-N-acetyl-3-O-(1-carboxyvinyl)-alpha-D-glucosamine + phosphate. It participates in cell wall biogenesis; peptidoglycan biosynthesis. Functionally, cell wall formation. Adds enolpyruvyl to UDP-N-acetylglucosamine. This is UDP-N-acetylglucosamine 1-carboxyvinyltransferase from Campylobacter jejuni subsp. jejuni serotype O:23/36 (strain 81-176).